We begin with the raw amino-acid sequence, 315 residues long: Ribose-phosphate pyrophosphokinase (315 aa).

Residues 37 to 39 (DGE) and 96 to 97 (RQ) each bind ATP. The Mg(2+) site is built by His131 and Asp170. The active site involves Lys194. Residues Arg196, Asp220, and 224 to 228 (DTGGT) each bind D-ribose 5-phosphate.

Belongs to the ribose-phosphate pyrophosphokinase family. Class I subfamily. In terms of assembly, homohexamer. Requires Mg(2+) as cofactor.

The protein localises to the cytoplasm. It carries out the reaction D-ribose 5-phosphate + ATP = 5-phospho-alpha-D-ribose 1-diphosphate + AMP + H(+). It participates in metabolic intermediate biosynthesis; 5-phospho-alpha-D-ribose 1-diphosphate biosynthesis; 5-phospho-alpha-D-ribose 1-diphosphate from D-ribose 5-phosphate (route I): step 1/1. Its function is as follows. Involved in the biosynthesis of the central metabolite phospho-alpha-D-ribosyl-1-pyrophosphate (PRPP) via the transfer of pyrophosphoryl group from ATP to 1-hydroxyl of ribose-5-phosphate (Rib-5-P). This Buchnera aphidicola subsp. Schizaphis graminum (strain Sg) protein is Ribose-phosphate pyrophosphokinase.